A 338-amino-acid chain; its full sequence is Biotin synthase (338 aa).

The 226-residue stretch at 59 to 284 folds into the Radical SAM core domain; the sequence is EEVEIEGIVS…RTTLRFAGGR (226 aa). Positions 74, 78, and 81 each coordinate [4Fe-4S] cluster. 3 residues coordinate [2Fe-2S] cluster: Cys-117, Cys-209, and Arg-279.

This sequence belongs to the radical SAM superfamily. Biotin synthase family. As to quaternary structure, homodimer. The cofactor is [4Fe-4S] cluster. It depends on [2Fe-2S] cluster as a cofactor.

It carries out the reaction (4R,5S)-dethiobiotin + (sulfur carrier)-SH + 2 reduced [2Fe-2S]-[ferredoxin] + 2 S-adenosyl-L-methionine = (sulfur carrier)-H + biotin + 2 5'-deoxyadenosine + 2 L-methionine + 2 oxidized [2Fe-2S]-[ferredoxin]. It participates in cofactor biosynthesis; biotin biosynthesis; biotin from 7,8-diaminononanoate: step 2/2. In terms of biological role, catalyzes the conversion of dethiobiotin (DTB) to biotin by the insertion of a sulfur atom into dethiobiotin via a radical-based mechanism. This is Biotin synthase from Corynebacterium urealyticum (strain ATCC 43042 / DSM 7109).